The primary structure comprises 3179 residues: Guanylate cyclase beta (3179 aa).

The Cytoplasmic portion of the chain corresponds to 1–60 (MKTQTLSLMNINGKRKFLGTNNKIYRKVIINPTSEDDIQKFCRNYFRIYNFSLYNFIRRL). The helical transmembrane segment at 61 to 81 (ISFDAILVYSLFLTVYIFSEI) threads the bilayer. Residues 82 to 88 (NHGETKK) are Extracellular-facing. The chain crosses the membrane as a helical span at residues 89 to 109 (YLFIDTAISLFFNIILLIVIE). The Cytoplasmic segment spans residues 110–295 (SLFELKKLKD…FCIKMNNIVY (186 aa)). The chain crosses the membrane as a helical span at residues 296–316 (YLIFMYFVFVVLSIVIKTIFF). The Extracellular portion of the chain corresponds to 317 to 328 (HKKNSFQNSRDS). Residues 329–349 (FLSMLEDFVGLYILVLPIMMY) form a helical membrane-spanning segment. Residues 350–988 (SEKSLIYIIQ…GRLNRFSLCK (639 aa)) are Cytoplasmic-facing. Residues 989–1009 (VFLWIIYLKITVVSFYFFHNF) traverse the membrane as a helical segment. At 1010–1020 (DNYFSGSSASS) the chain is on the extracellular side. Residues 1021–1041 (ILYTQTTFALLHYFLIIAFSA) form a helical membrane-spanning segment. Residues 1042 to 1069 (YEIDLPYKFVRRLPYIYQLSRRKYFLNN) lie on the Cytoplasmic side of the membrane. The helical transmembrane segment at 1070-1090 (NIILLTIIEAILISLTSYYIL) threads the bilayer. The Extracellular portion of the chain corresponds to 1091-1102 (RLNVFHLITHRE). A helical membrane pass occupies residues 1103–1123 (FTFHIFILNVFITTEKILLLS). At 1124 to 1127 (KTWH) the chain is on the cytoplasmic side. The helical transmembrane segment at 1128–1148 (IYFFIMAVLIIGILLIYVNIF) threads the bilayer. The Extracellular segment spans residues 1149–1168 (TLVDCIKNGKCEFSLFQMEN). Residues 1169–1189 (IYFWTSLFPILYINFIFDKLM) traverse the membrane as a helical segment. Residues 1190–1304 (KYIKNRIYPD…YEKGNKLKLR (115 aa)) lie on the Cytoplasmic side of the membrane. Residues 1305 to 1325 (IIVILLFLIYIIIFSSQTIID) form a helical membrane-spanning segment. Topologically, residues 1326 to 1331 (INTKSN) are extracellular. A helical membrane pass occupies residues 1332–1352 (IHYITMFYIIYFVLACVLLIY). Topologically, residues 1353 to 1360 (IRIRNKAT) are cytoplasmic. Residues 1361–1381 (STFFFFLSRFLLICGFCIELY) form a helical membrane-spanning segment. Residues 1382–1401 (DNISNDILNVLITYSFTVSY) lie on the Extracellular side of the membrane. N1383 carries an N-linked (GlcNAc...) asparagine glycan. The helical transmembrane segment at 1402–1422 (IFFMSFKILEALLVCISILLL) threads the bilayer. The Cytoplasmic segment spans residues 1423–1464 (TFGVYYEKNKNMIDICTHFCSNPYLSINNLDHMNISCLCKKQ). Residues 1465–1485 (IVIFLISLLSFTLICLSMKYY) form a helical membrane-spanning segment. The Extracellular segment spans residues 1486–1507 (EIFYLKKKFLFRYKQKVNLAKQ). Residues 1508-1528 (IEILHTMLPNFLVEYLLISDP) form a helical membrane-spanning segment. At 1529-2739 (KNDGIMVGKN…IINIDLTKKL (1211 aa)) the chain is on the cytoplasmic side. In terms of domain architecture, Guanylate cyclase 1 spans 1548–1700 (SVIFCDIDDF…DTVNTASRMK (153 aa)). 3 disordered regions span residues 2123–2153 (LHNYNPMKNKNKNKKNNKNVRRNEYPNYTSS), 2355–2379 (SINKQTERKPKKKNKKNIENKKDKK), and 2576–2656 (KDSD…HHHS). The span at 2131–2142 (NKNKNKKNNKNV) shows a compositional bias: basic residues. Residues 2584 to 2607 (NNNKISKNRYNNNNNNNNSNYSNI) show a composition bias toward low complexity. Residues 2614–2645 (HNNKKNHHHNNNKYHHHNNNKYHHHNNNKYHH) show a composition bias toward basic residues. The helical transmembrane segment at 2740–2760 (IIIFIFTEIFLSLCNIIELSF) threads the bilayer. Residues 2761 to 2770 (YEKKLRYNDS) are Extracellular-facing. The N-linked (GlcNAc...) asparagine glycan is linked to N2768. The chain crosses the membrane as a helical span at residues 2771 to 2791 (IVIIWLIRSIYLFIITYIWII). The Cytoplasmic portion of the chain corresponds to 2792-2809 (LKTKLKEYKNNSSKMMWT). Residues 2810-2830 (IFILNIFLCSWGIILIDLSCI) form a helical membrane-spanning segment. Topologically, residues 2831 to 2842 (HYSMLLGNKNER) are extracellular. Residues 2843–2863 (ALFFMKDASELIICIQLIFIK) traverse the membrane as a helical segment. The Cytoplasmic portion of the chain corresponds to 2864–2870 (NMLFKHK). The chain crosses the membrane as a helical span at residues 2871-2891 (FFFFVFFYIFLIYSFSKLFSI). The Extracellular portion of the chain corresponds to 2892-2895 (HTCQ). A helical transmembrane segment spans residues 2896–2916 (THICCSIILFISINILYFWYS). Residues 2917 to 3179 (EYLDRIQFLV…KLRQKKGLRS (263 aa)) are Cytoplasmic-facing. One can recognise a Guanylate cyclase 2 domain in the interval 2968-3102 (AFLFADIVGF…LDVLIANKIE (135 aa)). Mg(2+) contacts are provided by D2973, I2974, and D3017.

It in the N-terminal section; belongs to the cation transport ATPase (P-type) (TC 3.A.3) family. Type IV subfamily. The protein in the C-terminal section; belongs to the adenylyl cyclase class-4/guanylyl cyclase family. It depends on Mg(2+) as a cofactor. Mn(2+) is required as a cofactor.

The protein localises to the membrane. The catalysed reaction is GTP = 3',5'-cyclic GMP + diphosphate. Its activity is regulated as follows. Basal guanylate activity of the recombinant guanylate cyclase domains 1 and 2 is not modulated by an increase in Ca(2+) levels or by the gametogenesis inducer xanthurenic acid. Its function is as follows. Catalyzes the synthesis of the second messenger cGMP from GTP. Regulates cGMP production in gametocytes; however, is dispensable for the initiation of gametogenesis. Does not have adenylate cyclase activity. This chain is Guanylate cyclase beta, found in Plasmodium falciparum (isolate 3D7).